Here is a 324-residue protein sequence, read N- to C-terminus: Nidogen-1 (324 aa).

Residues 16–178 (PFLADLDTTD…GVWVFEIGSP (163 aa)) enclose the NIDO domain. A glycan (N-linked (GlcNAc...) asparagine) is linked at N97. Sulfotyrosine is present on residues Y200 and Y205. The segment at 219 to 259 (TQPFPSHSPRRGYPDPHNVPRTLAPSYEATERPHGIPTERT) is disordered. Residues 247-259 (ATERPHGIPTERT) show a composition bias toward basic and acidic residues. The EGF-like domain maps to 295 to 324 (SQQTCANNRHQCSVHAECRDYATGFCCRCV). Cystine bridges form between C299-C312 and C306-C321.

As to quaternary structure, interacts with FBLN1. Interacts with LGALS3BP. Interacts with PLXDC1. Interacts with SVEP1. In terms of processing, N- and O-glycosylated.

It localises to the secreted. The protein resides in the extracellular space. It is found in the extracellular matrix. The protein localises to the basement membrane. Its function is as follows. Sulfated glycoprotein widely distributed in basement membranes and tightly associated with laminin. Also binds to collagen IV and perlecan. It probably has a role in cell-extracellular matrix interactions. The sequence is that of Nidogen-1 (Nid1) from Rattus norvegicus (Rat).